A 193-amino-acid polypeptide reads, in one-letter code: dTTP/UTP pyrophosphatase (193 aa).

The Proton acceptor role is filled by D75.

Belongs to the Maf family. YhdE subfamily. It depends on a divalent metal cation as a cofactor.

It localises to the cytoplasm. It carries out the reaction dTTP + H2O = dTMP + diphosphate + H(+). It catalyses the reaction UTP + H2O = UMP + diphosphate + H(+). Nucleoside triphosphate pyrophosphatase that hydrolyzes dTTP and UTP. May have a dual role in cell division arrest and in preventing the incorporation of modified nucleotides into cellular nucleic acids. The polypeptide is dTTP/UTP pyrophosphatase (Koribacter versatilis (strain Ellin345)).